A 121-amino-acid polypeptide reads, in one-letter code: Small ribosomal subunit protein bS6 (121 aa).

Positions 99 to 121 (PSLMMRNVEREEARKTQQQEFAA) are disordered. A compositionally biased stretch (basic and acidic residues) spans 105-115 (NVEREEARKTQ).

It belongs to the bacterial ribosomal protein bS6 family.

In terms of biological role, binds together with bS18 to 16S ribosomal RNA. The sequence is that of Small ribosomal subunit protein bS6 from Polaromonas naphthalenivorans (strain CJ2).